We begin with the raw amino-acid sequence, 300 residues long: N-acetylmuramic acid 6-phosphate etherase 1 (300 aa).

The region spanning 59–222 (AAERFKKGGR…STGIMVKVGN (164 aa)) is the SIS domain. Glu87 acts as the Proton donor in catalysis. Glu118 is an active-site residue.

It belongs to the GCKR-like family. MurNAc-6-P etherase subfamily. In terms of assembly, homodimer.

It catalyses the reaction N-acetyl-D-muramate 6-phosphate + H2O = N-acetyl-D-glucosamine 6-phosphate + (R)-lactate. It functions in the pathway amino-sugar metabolism; N-acetylmuramate degradation. Specifically catalyzes the cleavage of the D-lactyl ether substituent of MurNAc 6-phosphate, producing GlcNAc 6-phosphate and D-lactate. This chain is N-acetylmuramic acid 6-phosphate etherase 1, found in Enterococcus faecalis (strain ATCC 700802 / V583).